The chain runs to 143 residues: Envelope protein A28 homolog (143 aa).

Residues 1–21 (MNTVQILVVILITTALSFLVF) form a helical; Signal-anchor for type II membrane protein membrane-spanning segment. At 22–143 (QLWYYAENYE…LLRLLMANTS (122 aa)) the chain is on the virion surface side.

Belongs to the poxviridae A28 protein family. In terms of processing, contains two intramolecular disulfide bonds. They are created by the viral disulfide bond formation pathway, a poxvirus-specific pathway that operates on the cytoplasmic side of the MV membranes.

It localises to the virion membrane. In terms of biological role, envelope protein required for virus entry into host cell and for cell-cell fusion (syncytium formation). This chain is Envelope protein A28 homolog, found in Amsacta (AmEPV).